The primary structure comprises 286 residues: Ferric acinetobactin reductase (286 aa).

One can recognise an FAD-binding FR-type domain in the interval 25–131 (MEQLEMTIVS…IGPRPHFIPN (107 aa)). The FAD site is built by R79, V80, T82, D96, V98, H100, D102, S104, A106, R250, G252, and S255.

This sequence belongs to the SIP oxidoreductase family. In terms of assembly, monomer in solution. FAD serves as cofactor.

It carries out the reaction 2 a Fe(II)-siderophore + NAD(+) + H(+) = 2 a Fe(III)-siderophore + NADH. It catalyses the reaction 2 a Fe(II)-siderophore + NADP(+) + H(+) = 2 a Fe(III)-siderophore + NADPH. In terms of biological role, ferric-siderophore reductase involved in iron removal from the siderophores after their transport into the cell. Interacts with the siderophores acinetobactin (Acb) and preacinetobactin (pre-Acb) and catalyzes the reduction of the ferric iron bound to the siderophores to ferrous iron, resulting in destabilization of the siderophore chelation complex and entrance of ferrous iron into the intracellular pool of bioavailable metals. Can use NADH and NADPH as electron donors in vitro, but the reduction rate is very slow, suggesting that NADH and NADPH are not the physiological partners of BauF. The polypeptide is Ferric acinetobactin reductase (Acinetobacter baumannii).